The chain runs to 243 residues: Tryptophan synthase alpha chain (243 aa).

Active-site proton acceptor residues include E31 and D42.

Belongs to the TrpA family. Tetramer of two alpha and two beta chains.

It catalyses the reaction (1S,2R)-1-C-(indol-3-yl)glycerol 3-phosphate + L-serine = D-glyceraldehyde 3-phosphate + L-tryptophan + H2O. The protein operates within amino-acid biosynthesis; L-tryptophan biosynthesis; L-tryptophan from chorismate: step 5/5. In terms of biological role, the alpha subunit is responsible for the aldol cleavage of indoleglycerol phosphate to indole and glyceraldehyde 3-phosphate. This is Tryptophan synthase alpha chain from Staphylococcus haemolyticus (strain JCSC1435).